A 192-amino-acid polypeptide reads, in one-letter code: Guanylate kinase (192 aa).

One can recognise a Guanylate kinase-like domain in the interval 7–185 (GLIIILSSPS…TLKKIHEIIV (179 aa)). 14–21 (SPSGTGKS) is an ATP binding site.

Belongs to the guanylate kinase family.

The protein resides in the cytoplasm. The enzyme catalyses GMP + ATP = GDP + ADP. In terms of biological role, essential for recycling GMP and indirectly, cGMP. This chain is Guanylate kinase, found in Rickettsia felis (strain ATCC VR-1525 / URRWXCal2) (Rickettsia azadi).